We begin with the raw amino-acid sequence, 344 residues long: Lysophosphatidic acid receptor 6 (344 aa).

The Extracellular portion of the chain corresponds to 1-25; the sequence is MVSSNGSQCPYDDSFKYTLYGCMFS. N-linked (GlcNAc...) asparagine glycosylation occurs at Asn-5. The helical transmembrane segment at 26–46 threads the bilayer; sequence MVFVLGLISNCVAIYIFICAL. Residues 47–56 lie on the Cytoplasmic side of the membrane; that stretch reads KVRNETTTYM. A helical transmembrane segment spans residues 57 to 77; it reads INLAMSDLLFVFTLPFRIFYF. At 78 to 90 the chain is on the extracellular side; that stretch reads ATRNWPFGDLLCK. The cysteines at positions 89 and 168 are disulfide-linked. The helical transmembrane segment at 91 to 111 threads the bilayer; it reads ISVMLFYTNMYGSILFLTCIS. Residues 112–134 lie on the Cytoplasmic side of the membrane; that stretch reads VDRFLAIVYPFKSKTLRTKRNAK. The helical transmembrane segment at 135–155 threads the bilayer; sequence IVCIAVWFTVMGGSAPAVFFQ. Over 156–183 the chain is Extracellular; the sequence is STHSQGNNTSEACFENFPAATWKTYLSR. Residues Asn-162 and Asn-163 are each glycosylated (N-linked (GlcNAc...) asparagine). Residues 184 to 204 traverse the membrane as a helical segment; sequence IVIFIEIVGFFIPLILNVTCS. The Cytoplasmic segment spans residues 205–230; that stretch reads SMVLRTLNKPVTLSRSKMNKTKVLKM. A helical transmembrane segment spans residues 231–251; the sequence is IFVHLVIFCFCFVPYNINLIL. At 252 to 272 the chain is on the extracellular side; the sequence is YSLMRTQTFVNCSVVAAVRTM. Asn-262 carries an N-linked (GlcNAc...) asparagine glycan. The chain crosses the membrane as a helical span at residues 273-293; the sequence is YPITLCIAVSNCCFDPIVYYF. Residue Cys-284 is the site of S-palmitoyl cysteine attachment. At 294-344 the chain is on the cytoplasmic side; sequence TSDTIQNSIKMKNWSVRRSDSRFSEVQGTENFIQHNLQTLKNKIFDNESAI.

Belongs to the G-protein coupled receptor 1 family. In terms of tissue distribution, ubiquitously expressed. Detected in the hair follicles and skin (at protein level).

Its subcellular location is the cell membrane. Binds to oleoyl-L-alpha-lysophosphatidic acid (LPA). Intracellular cAMP is involved in the receptor activation. Important for the maintenance of hair growth and texture. In Mus musculus (Mouse), this protein is Lysophosphatidic acid receptor 6 (Lpar6).